Consider the following 246-residue polypeptide: Ribonuclease 3 (246 aa).

In terms of domain architecture, RNase III spans 18–147 (FQELQNKIGI…FIGALYLDQG (130 aa)). Position 60 (E60) interacts with Mg(2+). Residue D64 is part of the active site. D133 and E136 together coordinate Mg(2+). E136 is an active-site residue. One can recognise a DRBM domain in the interval 173–242 (DFKSQLQELV…AQMALETLRA (70 aa)).

The protein belongs to the ribonuclease III family. As to quaternary structure, homodimer. Mg(2+) is required as a cofactor.

Its subcellular location is the cytoplasm. The enzyme catalyses Endonucleolytic cleavage to 5'-phosphomonoester.. Digests double-stranded RNA. Involved in the processing of primary rRNA transcript to yield the immediate precursors to the large and small rRNAs (23S and 16S). Processes some mRNAs, and tRNAs when they are encoded in the rRNA operon. Processes pre-crRNA and tracrRNA of type II CRISPR loci if present in the organism. This chain is Ribonuclease 3, found in Geobacillus kaustophilus (strain HTA426).